Reading from the N-terminus, the 93-residue chain is Cell division protein FtsB (93 aa).

The Cytoplasmic portion of the chain corresponds to 1 to 3; sequence MRL. The helical transmembrane segment at 4-21 threads the bilayer; the sequence is FILVLTLLFGWLQYTLWF. The Periplasmic segment spans residues 22 to 93; sequence GKNGVSDYYT…FYRIVGEENQ (72 aa). Residues 42–75 adopt a coiled-coil conformation; the sequence is VNTKLQARNSEMYAEIDDLKQGLDAIEERARHEL.

It belongs to the FtsB family. Part of a complex composed of FtsB, FtsL and FtsQ.

Its subcellular location is the cell inner membrane. In terms of biological role, essential cell division protein. May link together the upstream cell division proteins, which are predominantly cytoplasmic, with the downstream cell division proteins, which are predominantly periplasmic. The sequence is that of Cell division protein FtsB from Vibrio vulnificus (strain YJ016).